A 627-amino-acid chain; its full sequence is tRNA uridine 5-carboxymethylaminomethyl modification enzyme MnmG (627 aa).

Residues 16–21 (GAGHAG), Val-128, and Ser-183 each bind FAD. Residue 275-289 (GPRYCPSIEDKVMRF) coordinates NAD(+). Gln-372 lines the FAD pocket.

This sequence belongs to the MnmG family. Homodimer. Heterotetramer of two MnmE and two MnmG subunits. FAD is required as a cofactor.

The protein resides in the cytoplasm. In terms of biological role, NAD-binding protein involved in the addition of a carboxymethylaminomethyl (cmnm) group at the wobble position (U34) of certain tRNAs, forming tRNA-cmnm(5)s(2)U34. In Geobacter sulfurreducens (strain ATCC 51573 / DSM 12127 / PCA), this protein is tRNA uridine 5-carboxymethylaminomethyl modification enzyme MnmG.